Consider the following 213-residue polypeptide: Probable GTP-binding protein EngB (213 aa).

Residues serine 30–isoleucine 204 enclose the EngB-type G domain. Residues glycine 38–serine 45, glycine 65–leucine 69, aspartate 83–glycine 86, threonine 150–aspartate 153, and isoleucine 183–alanine 185 contribute to the GTP site. Positions 45 and 67 each coordinate Mg(2+).

Belongs to the TRAFAC class TrmE-Era-EngA-EngB-Septin-like GTPase superfamily. EngB GTPase family. Mg(2+) is required as a cofactor.

Necessary for normal cell division and for the maintenance of normal septation. This chain is Probable GTP-binding protein EngB, found in Leptospira biflexa serovar Patoc (strain Patoc 1 / Ames).